The following is a 407-amino-acid chain: Endo-1,4-beta-xylanase (407 aa).

The first 28 residues, 1–28 (MRNVVRKPLTIGLALTLLLPMGMTATSA), serve as a signal peptide directing secretion. Positions 42–406 (ALNAPQLDQR…KPAYWAIIDH (365 aa)) constitute a GH10 domain. Catalysis depends on Glu187, which acts as the Proton donor. Residue Glu293 is the Nucleophile of the active site.

The protein belongs to the glycosyl hydrolase 10 (cellulase F) family.

The protein localises to the secreted. The enzyme catalyses Endohydrolysis of (1-&gt;4)-beta-D-xylosidic linkages in xylans.. It participates in glycan degradation; xylan degradation. This chain is Endo-1,4-beta-xylanase, found in Geobacillus stearothermophilus (Bacillus stearothermophilus).